Consider the following 624-residue polypeptide: Actin-related protein 8 (624 aa).

Met-1 is modified (N-acetylmethionine). The span at 1–25 (MTQAEKGEAENGKEKGGEKEKEQRG) shows a compositional bias: basic and acidic residues. A disordered region spans residues 1–29 (MTQAEKGEAENGKEKGGEKEKEQRGVKRP). Positions 55 and 56 each coordinate ATP. Ser-132 bears the Phosphoserine mark. 283-286 (DVGD) contributes to the ATP binding site. Ser-412 is modified (phosphoserine). The tract at residues 430-462 (SKQEQSAKATADRKSASKPIGFEGDLRGQSSDL) is disordered.

The protein belongs to the actin family. ARP8 subfamily. Component of the chromatin remodeling INO80 complex; specifically part of a complex module associated with the DBINO domain of INO80. Exists as monomers and dimers, but the dimer is most probably the biologically relevant form required for stable interactions with histones that exploits the twofold symmetry of the nucleosome core.

Its subcellular location is the nucleus. The protein resides in the chromosome. Functionally, plays an important role in the functional organization of mitotic chromosomes. Exhibits low basal ATPase activity, and unable to polymerize. In terms of biological role, proposed core component of the chromatin remodeling INO80 complex which is involved in transcriptional regulation, DNA replication and probably DNA repair. Required for the recruitment of INO80 (and probably the INO80 complex) to sites of DNA damage Strongly prefer nucleosomes and H3-H4 tetramers over H2A-H2B dimers, suggesting it may act as a nucleosome recognition module within the complex. The sequence is that of Actin-related protein 8 (ACTR8) from Bos taurus (Bovine).